A 250-amino-acid chain; its full sequence is tRNA pseudouridine synthase A (250 aa).

Asp-52 functions as the Nucleophile in the catalytic mechanism. Residue Tyr-111 participates in substrate binding.

This sequence belongs to the tRNA pseudouridine synthase TruA family. In terms of assembly, homodimer.

It carries out the reaction uridine(38/39/40) in tRNA = pseudouridine(38/39/40) in tRNA. Formation of pseudouridine at positions 38, 39 and 40 in the anticodon stem and loop of transfer RNAs. This chain is tRNA pseudouridine synthase A, found in Methylorubrum extorquens (strain PA1) (Methylobacterium extorquens).